Reading from the N-terminus, the 267-residue chain is Aspartate/glutamate leucyltransferase (267 aa).

Residues 246–267 (EQEEQTRPLFRPSATGFSTGQE) are disordered.

This sequence belongs to the R-transferase family. Bpt subfamily.

The protein resides in the cytoplasm. It catalyses the reaction N-terminal L-glutamyl-[protein] + L-leucyl-tRNA(Leu) = N-terminal L-leucyl-L-glutamyl-[protein] + tRNA(Leu) + H(+). The enzyme catalyses N-terminal L-aspartyl-[protein] + L-leucyl-tRNA(Leu) = N-terminal L-leucyl-L-aspartyl-[protein] + tRNA(Leu) + H(+). Functionally, functions in the N-end rule pathway of protein degradation where it conjugates Leu from its aminoacyl-tRNA to the N-termini of proteins containing an N-terminal aspartate or glutamate. This chain is Aspartate/glutamate leucyltransferase, found in Granulibacter bethesdensis (strain ATCC BAA-1260 / CGDNIH1).